A 142-amino-acid chain; its full sequence is Transcriptional regulator MraZ (142 aa).

2 consecutive SpoVT-AbrB domains span residues 5-51 (ASAL…PRPE) and 77-120 (AMDV…DSQT).

This sequence belongs to the MraZ family. As to quaternary structure, forms oligomers.

Its subcellular location is the cytoplasm. The protein resides in the nucleoid. The chain is Transcriptional regulator MraZ from Burkholderia cenocepacia (strain ATCC BAA-245 / DSM 16553 / LMG 16656 / NCTC 13227 / J2315 / CF5610) (Burkholderia cepacia (strain J2315)).